The sequence spans 299 residues: Palmitoyltransferase ZDHHC3 (299 aa).

Topologically, residues 1 to 47 (MMLIPTHHFRNIERKPEYLQPEKCVPPPYPGPVGTMWFIRDGCGIAC) are cytoplasmic. Y18 carries the phosphotyrosine modification. The helical transmembrane segment at 48–68 (AIVTWFLVLYAEFVVLFVMLI) threads the bilayer. Topologically, residues 69–72 (PSRD) are extracellular. The helical transmembrane segment at 73-93 (YVYSIINGIVFNLLAFLALAS) threads the bilayer. The Cytoplasmic segment spans residues 94–171 (HCRAMLTDPG…NCVGENNQKY (78 aa)). The DHHC domain occupies 127–177 (YKCPKCCSIKPDRAHHCSVCKRCIRKMDHHCPWVNNCVGENNQKYFVLFTM). A lipid anchor (S-palmitoyl cysteine) is attached at C146. The active-site S-palmitoyl cysteine intermediate is C157. Residues 172 to 192 (FVLFTMYIALISLHALIMVGF) form a helical membrane-spanning segment. Residues 193–214 (HFLHCFEEDWTKCSSFSPPTTV) are Extracellular-facing. A helical membrane pass occupies residues 215-235 (ILLILLCFEGLLFLIFTSVMF). The Cytoplasmic segment spans residues 236–299 (GTQVHSICTD…GKADPYQYVV (64 aa)).

The protein belongs to the DHHC palmitoyltransferase family. In terms of assembly, monomer. Homooligomers. The monomeric form has a higher catalytic activity. Forms heterooligomers with ZDHHC7. Interacts with TNFRSF10A. Post-translationally, autopalmitoylated. In terms of processing, phosphorylation by FGFR1 and SRC probably regulates the palmitoyltransferase activity. In terms of tissue distribution, widely expressed with significant expression in heart, lung, liver, skeletal muscle, kidney, testis, thymus, small intestine and leukocyte.

It localises to the golgi apparatus membrane. The catalysed reaction is L-cysteinyl-[protein] + hexadecanoyl-CoA = S-hexadecanoyl-L-cysteinyl-[protein] + CoA. The enzyme catalyses L-cysteinyl-[protein] + tetradecanoyl-CoA = S-tetradecanoyl-L-cysteinyl-[protein] + CoA. It carries out the reaction L-cysteinyl-[protein] + octadecanoyl-CoA = S-octadecanoyl-L-cysteinyl-[protein] + CoA. Golgi-localized palmitoyltransferase that catalyzes the addition of palmitate onto various protein substrates. Has no stringent fatty acid selectivity and in addition to palmitate can also transfer onto target proteins myristate from tetradecanoyl-CoA and stearate from octadecanoyl-CoA. Plays an important role in G protein-coupled receptor signaling pathways involving GNAQ and potentially other heterotrimeric G proteins by regulating their dynamic association with the plasma membrane. Palmitoylates ITGA6 and ITGB4, thereby regulating the alpha-6/beta-4 integrin localization, expression and function in cell adhesion to laminin. Plays a role in the TRAIL-activated apoptotic signaling pathway most probably through the palmitoylation and localization to the plasma membrane of TNFRSF10A. In the brain, by palmitoylating the gamma subunit GABRG2 of GABA(A) receptors and regulating their postsynaptic accumulation, plays a role in synaptic GABAergic inhibitory function and GABAergic innervation. Palmitoylates the neuronal protein GAP43 which is also involved in the formation of GABAergic synapses. Palmitoylates NCDN thereby regulating its association with endosome membranes. Probably palmitoylates PRCD and is involved in its proper localization within the photoreceptor. Could mediate the palmitoylation of NCAM1 and regulate neurite outgrowth. Could palmitoylate DNAJC5 and regulate its localization to Golgi membranes. Also constitutively palmitoylates DLG4. May also palmitoylate SNAP25. Could palmitoylate the glutamate receptors GRIA1 and GRIA2 but this has not been confirmed in vivo. Could also palmitoylate the D(2) dopamine receptor DRD2. May also palmitoylate LAMTOR1, promoting its localization to lysosomal membranes. Palmitoylates the Toll-like receptor 9/TLR9 in the Golgi and thereby regulates TLR9 trafficking to endosomes. May palmitoylate CALHM1 and CALHM3 subunits of gustatory voltage-gated ion channels and modulate channel gating and kinetics. Functionally, may also function as a calcium transporter. This Homo sapiens (Human) protein is Palmitoyltransferase ZDHHC3.